A 608-amino-acid polypeptide reads, in one-letter code: Elongation factor 4 (608 aa).

The region spanning 11 to 193 is the tr-type G domain; it reads KKIRNFSIIA…QIVEKVPEPS (183 aa). GTP-binding positions include 23–28 and 140–143; these read DHGKST and NKID.

The protein belongs to the TRAFAC class translation factor GTPase superfamily. Classic translation factor GTPase family. LepA subfamily.

It localises to the cell membrane. The enzyme catalyses GTP + H2O = GDP + phosphate + H(+). Required for accurate and efficient protein synthesis under certain stress conditions. May act as a fidelity factor of the translation reaction, by catalyzing a one-codon backward translocation of tRNAs on improperly translocated ribosomes. Back-translocation proceeds from a post-translocation (POST) complex to a pre-translocation (PRE) complex, thus giving elongation factor G a second chance to translocate the tRNAs correctly. Binds to ribosomes in a GTP-dependent manner. This Listeria monocytogenes serotype 4b (strain CLIP80459) protein is Elongation factor 4.